The chain runs to 105 residues: Neuropeptide-like protein 32 (105 aa).

Positions Met1–Ser22 are cleaved as a signal peptide. Positions Phe23–Arg54 are excised as a propeptide. Gly59 bears the Glycine amide mark. Tryptophan amide is present on Trp64. Residues Gly68, Gly73, and Gly80 each carry the glycine amide modification. Tryptophan amide is present on Trp86. A glycine amide mark is found at Gly91 and Gly98. Trp103 is modified (tryptophan amide).

The protein belongs to the YARP (YGGW-amide related peptide) family.

Its subcellular location is the secreted. May have antimicrobial activity. This Caenorhabditis elegans protein is Neuropeptide-like protein 32 (nlp-32).